We begin with the raw amino-acid sequence, 503 residues long: MEEFQRYFELDRSQQHDLLYPLIFREYIYAFAHDHGLNRSDLLENVGYDNKSSLRIVKRFITRMYRQNHLIISANDSTQNKCFGYNKNLYSQMISEGFAVIVEIPFSLRLPPSGTEIVKYYNLQSIHSIFPFLEDKFPRLNYVLDVLIPYPIHLEILVQILRYWVKDASSLHLLRLFLHEYSNWNSFITTKKSISIFSKTNPRLFLFLYNSYACEYESILLFLRNQFSHLRLTSSGVFFERIYFYGKIKHPVEEVFANDFPAIRRVFKDPFMHYVRYQGKSFLVSKDTPLLMNKWKYYLVHLWQWHFYVWAQPGRIYINLLFKHSFGFLGYLSSVRQNLSLVRSQTLENSFIMDNAIKKLDTLAPISPLIGSLAKMQFCSALGHPVSKSTWTDSSDFSIINRFARICRNLSHYYSGSSKKKNLYRIKYILRLSCVKTLACKHKSTVRVFLKRFGSELLEEFFTEEEDVLSFIFPRTYSTFRSLYRGRVWYLDIVCINDLVNQE.

The protein belongs to the intron maturase 2 family. MatK subfamily.

It is found in the plastid. Its subcellular location is the chloroplast. Its function is as follows. Usually encoded in the trnK tRNA gene intron. Probably assists in splicing its own and other chloroplast group II introns. The protein is Maturase K of Rhamnus cathartica (Common buckthorn).